We begin with the raw amino-acid sequence, 384 residues long: MSQDFYEILGVSRDASEDEIQEAYREKAREYHPDVSDDPDAEEKFKQAKKAKEVLTDEEKRQMYDQMGHERFEQAEKRGGAGGGGGRGGMGGDPFGGGAGGFDMQDIFDQFFGGGGRGGRGGSRRRQGQDLQTRLEIDLEEAYNGATKQLNVTRPEACDDCDGAGHPPGADSETCPECNGQGQTTQVQQTPMGRVQQRTTCRRCDGEGTLYDETCSTCRGNGVVQNDASLEVEIPSGIADGQTLRMEREGAPGENGGPNGDLLIEVQVRDHPDFERDGDSLQHQQAISFPQAVFGDTITVPTLDGEVEVDVPSGTQSGEVFRLEGKGMPRLRRRGHGDLYVQVQVVTPDSLNAEQKEALEQFAEAGGEEVDVDEGFFEKLKNSL.

The region spanning 4–68 (DFYEILGVSR…EKRQMYDQMG (65 aa)) is the J domain. 2 disordered regions span residues 29–60 (REYH…DEEK) and 73–131 (EQAE…GQDL). Basic and acidic residues predominate over residues 42 to 60 (EEKFKQAKKAKEVLTDEEK). Positions 80-101 (GAGGGGGRGGMGGDPFGGGAGG) are enriched in gly residues. Low complexity predominate over residues 102–111 (FDMQDIFDQF). The segment covering 112–121 (FGGGGRGGRG) has biased composition (gly residues). The CR-type zinc finger occupies 145–227 (GATKQLNVTR…CRGNGVVQND (83 aa)). 4 residues coordinate Zn(2+): Cys-158, Cys-161, Cys-175, and Cys-178. 4 CXXCXGXG motif repeats span residues 158 to 165 (CDDCDGAG), 175 to 182 (CPECNGQG), 201 to 208 (CRRCDGEG), and 215 to 222 (CSTCRGNG). Residues 160-191 (DCDGAGHPPGADSETCPECNGQGQTTQVQQTP) form a disordered region. Over residues 180–190 (GQGQTTQVQQT) the composition is skewed to low complexity. Residues Cys-201, Cys-204, Cys-215, and Cys-218 each coordinate Zn(2+).

This sequence belongs to the DnaJ family. As to quaternary structure, homodimer. It depends on Zn(2+) as a cofactor.

Its subcellular location is the cytoplasm. Participates actively in the response to hyperosmotic and heat shock by preventing the aggregation of stress-denatured proteins and by disaggregating proteins, also in an autonomous, DnaK-independent fashion. Unfolded proteins bind initially to DnaJ; upon interaction with the DnaJ-bound protein, DnaK hydrolyzes its bound ATP, resulting in the formation of a stable complex. GrpE releases ADP from DnaK; ATP binding to DnaK triggers the release of the substrate protein, thus completing the reaction cycle. Several rounds of ATP-dependent interactions between DnaJ, DnaK and GrpE are required for fully efficient folding. Also involved, together with DnaK and GrpE, in the DNA replication of plasmids through activation of initiation proteins. In Haloarcula marismortui (strain ATCC 43049 / DSM 3752 / JCM 8966 / VKM B-1809) (Halobacterium marismortui), this protein is Chaperone protein DnaJ.